We begin with the raw amino-acid sequence, 443 residues long: Thymidine phosphorylase (443 aa).

Belongs to the thymidine/pyrimidine-nucleoside phosphorylase family. Homodimer.

It catalyses the reaction thymidine + phosphate = 2-deoxy-alpha-D-ribose 1-phosphate + thymine. The protein operates within pyrimidine metabolism; dTMP biosynthesis via salvage pathway; dTMP from thymine: step 1/2. Its function is as follows. The enzymes which catalyze the reversible phosphorolysis of pyrimidine nucleosides are involved in the degradation of these compounds and in their utilization as carbon and energy sources, or in the rescue of pyrimidine bases for nucleotide synthesis. This Shewanella woodyi (strain ATCC 51908 / MS32) protein is Thymidine phosphorylase.